We begin with the raw amino-acid sequence, 1034 residues long: Multidrug export protein AcrF (1034 aa).

The Cytoplasmic portion of the chain corresponds to 1 to 9 (MANFFIRRP). The helical transmembrane segment at 10–28 (IFAWVLAIILMMAGALAIL) threads the bilayer. Residues 29–339 (QLPVAQYPTI…TPFVQLSIHE (311 aa)) lie on the Periplasmic side of the membrane. Residues 340-359 (VVKTLFEAIMLVFLVMYLFL) form a helical membrane-spanning segment. Over 360–365 (QNMRAT) the chain is Cytoplasmic. Residues 366 to 385 (LIPTIAVPVVLLGTFAILAA) traverse the membrane as a helical segment. The Periplasmic segment spans residues 386–391 (FGYSIN). Residues 392–413 (TLTMFGMVLAIGLLVDDAIVVV) traverse the membrane as a helical segment. The Cytoplasmic portion of the chain corresponds to 414–441 (ENVERVMMEDKLPPKEATEKSMSQIQGA). A helical transmembrane segment spans residues 442-460 (LVGIAMVLSAVFIPMAFFG). The Periplasmic segment spans residues 461–473 (GSTGAIYRQFSIT). A helical transmembrane segment spans residues 474-496 (IVSAMALSVLVALILTPALCATL). The Cytoplasmic segment spans residues 497-537 (LKPVSAEHHENKGGFFGWFNTTFDHSVNHYTNSVGKILGST). Residues 538 to 556 (GRYLLIYALIVAGMVVLFL) traverse the membrane as a helical segment. Over 557 to 871 (RLPSSFLPEE…SYQERLSGNQ (315 aa)) the chain is Periplasmic. The chain crosses the membrane as a helical span at residues 872–891 (APALVAISFVVVFLCLAALY). Topologically, residues 892–897 (ESWSIP) are cytoplasmic. The chain crosses the membrane as a helical span at residues 898-917 (VSVMLVVPLGIVGVLLAATL). Residues 918–923 (FNQKND) lie on the Periplasmic side of the membrane. A helical membrane pass occupies residues 924-945 (VYFMVGLLTTIGLSAKNAILIV). Topologically, residues 946–973 (EFAKDLMEKEGKGVVEATLMAVRMRLRP) are cytoplasmic. The chain crosses the membrane as a helical span at residues 974–992 (ILMTSLAFILGVLPLAISN). At 993-1005 (GAGSGAQNAVGIG) the chain is on the periplasmic side. Residues 1006-1028 (VMGGMVSATLLAIFFVPVFFVVI) traverse the membrane as a helical segment. Residues 1029–1034 (RRCFKG) lie on the Cytoplasmic side of the membrane.

Belongs to the resistance-nodulation-cell division (RND) (TC 2.A.6) family. As to quaternary structure, part of the tripartite efflux system AcrEF-TolC, which is composed of an inner membrane transporter, AcrF, a periplasmic membrane fusion protein, AcrE, and an outer membrane component, TolC. The complex forms a large protein conduit and can translocate molecules across both the inner and outer membranes.

It is found in the cell inner membrane. In terms of biological role, part of the tripartite efflux system AcrEF-TolC. Involved in the efflux of indole and organic solvents. The sequence is that of Multidrug export protein AcrF (acrF) from Escherichia coli (strain K12).